Reading from the N-terminus, the 150-residue chain is Snaclec rhinocetin subunit beta (150 aa).

The first 23 residues, 1-23, serve as a signal peptide directing secretion; the sequence is MGRFIFLSSGLLVVFLSLSGTGA. 3 cysteine pairs are disulfide-bonded: C27/C38, C55/C144, and C121/C136. In terms of domain architecture, C-type lectin spans 34-145; the sequence is YEGYCYKVFK…CNRQQYFVCK (112 aa).

This sequence belongs to the snaclec family. In terms of assembly, heterodimer; disulfide-linked. In terms of tissue distribution, expressed by the venom gland.

It localises to the secreted. Functionally, antagonist of the alpha-2 subunit of the integrin alpha-2/beta-1 (ITGA2/ITGB1) on human platelets and endothelial cells. This protein inhibits collagen-stimulated activation of human platelets in a dose-dependent manner. In addition, it antagonizes the binding of monoclonal antibodies against the alpha-2 subunit of integrin alpha-2/beta-1 to platelets and it coimmunoprecipitates with this integrin. In Bitis rhinoceros (West African gaboon viper), this protein is Snaclec rhinocetin subunit beta.